We begin with the raw amino-acid sequence, 441 residues long: Probable cyclic di-GMP phosphodiesterase VC_1348 (441 aa).

The Response regulatory domain occupies Thr72–Leu187. Asp120 is modified (4-aspartylphosphate). One can recognise an HD-GYP domain in the interval Leu214–Asp425.

It carries out the reaction 3',3'-c-di-GMP + 2 H2O = 2 GMP + 2 H(+). Its function is as follows. Probable phosphodiesterase (PDE) that catalyzes the hydrolysis of cyclic diguanylate (c-di-GMP). Increases motility and decreases biofilm formation in vivo. This is Probable cyclic di-GMP phosphodiesterase VC_1348 from Vibrio cholerae serotype O1 (strain ATCC 39315 / El Tor Inaba N16961).